Consider the following 329-residue polypeptide: Acetyl-coenzyme A carboxylase carboxyl transferase subunit alpha (329 aa).

A CoA carboxyltransferase C-terminal domain is found at 40-294 (QLETLAARRR…KNALEKHLSE (255 aa)).

Belongs to the AccA family. In terms of assembly, acetyl-CoA carboxylase is a heterohexamer composed of biotin carboxyl carrier protein (AccB), biotin carboxylase (AccC) and two subunits each of ACCase subunit alpha (AccA) and ACCase subunit beta (AccD).

The protein localises to the cytoplasm. The catalysed reaction is N(6)-carboxybiotinyl-L-lysyl-[protein] + acetyl-CoA = N(6)-biotinyl-L-lysyl-[protein] + malonyl-CoA. It functions in the pathway lipid metabolism; malonyl-CoA biosynthesis; malonyl-CoA from acetyl-CoA: step 1/1. Functionally, component of the acetyl coenzyme A carboxylase (ACC) complex. First, biotin carboxylase catalyzes the carboxylation of biotin on its carrier protein (BCCP) and then the CO(2) group is transferred by the carboxyltransferase to acetyl-CoA to form malonyl-CoA. This is Acetyl-coenzyme A carboxylase carboxyl transferase subunit alpha from Prochlorococcus marinus (strain NATL2A).